The sequence spans 515 residues: ATP synthase subunit alpha (515 aa).

Residue 171–178 participates in ATP binding; sequence GDRQTGKT.

It belongs to the ATPase alpha/beta chains family. In terms of assembly, F-type ATPases have 2 components, CF(1) - the catalytic core - and CF(0) - the membrane proton channel. CF(1) has five subunits: alpha(3), beta(3), gamma(1), delta(1), epsilon(1). CF(0) has three main subunits: a(1), b(2) and c(9-12). The alpha and beta chains form an alternating ring which encloses part of the gamma chain. CF(1) is attached to CF(0) by a central stalk formed by the gamma and epsilon chains, while a peripheral stalk is formed by the delta and b chains.

The protein localises to the cell inner membrane. The enzyme catalyses ATP + H2O + 4 H(+)(in) = ADP + phosphate + 5 H(+)(out). In terms of biological role, produces ATP from ADP in the presence of a proton gradient across the membrane. The alpha chain is a regulatory subunit. In Xylella fastidiosa (strain Temecula1 / ATCC 700964), this protein is ATP synthase subunit alpha.